We begin with the raw amino-acid sequence, 1089 residues long: Probable transport protein MmpL8 (1089 aa).

The interval 1-26 is disordered; it reads MCDVLMQPVRTPRPSTNLRSKPLRPT. Transmembrane regions (helical) follow at residues 44–64, 222–242, 257–277, 316–336, 349–369, 400–420, 555–575, 874–894, 898–918, 930–950, 973–993, and 996–1016; these read WVVI…VPSL, ITIL…TMVL, LVAI…IFMS, IGKV…GMVF, LGIS…ALMV, KTHL…AGLA, AIST…LLGG, IIAM…RAIV, YLIG…VIVF, IPGL…MLLI, GGVI…LVFA, and GSVV…TFLV. The tract at residues 1056–1078 is disordered; it reads RTKRKPLLPKEEEEQSPPDDDDL. The segment covering 1066-1078 has biased composition (acidic residues); it reads EEEEQSPPDDDDL.

It belongs to the resistance-nodulation-cell division (RND) (TC 2.A.6) family. MmpL subfamily.

Its subcellular location is the cell membrane. This chain is Probable transport protein MmpL8 (mmpL8), found in Mycobacterium tuberculosis (strain ATCC 25177 / H37Ra).